The following is a 158-amino-acid chain: Ribosome maturation factor RimP (158 aa).

Belongs to the RimP family.

It is found in the cytoplasm. Functionally, required for maturation of 30S ribosomal subunits. This Pseudomonas syringae pv. tomato (strain ATCC BAA-871 / DC3000) protein is Ribosome maturation factor RimP.